Consider the following 582-residue polypeptide: Vacuolar basic amino acid transporter 5 (582 aa).

Residues 1 to 44 (MEETKYSSQQEIEGACGSDASLNARGSNDSPMGLSLYLCLASLT) lie on the Cytoplasmic side of the membrane. Residues 45-65 (LVLFITALDILIVGTIIDVVA) form a helical membrane-spanning segment. The Vacuolar portion of the chain corresponds to 66 to 80 (EQFGNYSKTGWLVTG). The N-linked (GlcNAc...) asparagine glycan is linked to N70. Residues 81-101 (YSLPNAILSLIWGRFASIIGF) form a helical membrane-spanning segment. The Cytoplasmic portion of the chain corresponds to 102 to 104 (QHS). A helical transmembrane segment spans residues 105–125 (LILAILIFEAGSLIAALASSM). The Vacuolar segment spans residues 126–132 (NMLIFGR). Residues 133-153 (VVAGVGGSGLQTLCFVIGCTM) traverse the membrane as a helical segment. The Cytoplasmic portion of the chain corresponds to 154 to 160 (VGERSRP). A helical membrane pass occupies residues 161-181 (LVISILSCAFAVAAIVGPIIG). Residues 182–191 (GAFTTHVTWR) lie on the Vacuolar side of the membrane. A helical membrane pass occupies residues 192–212 (WCFYINLPIGGLAIIMFLLTY). Residues 213–256 (KAENKGILQQIKDAIGTISSFTFSKFRHQVNFKRLMNGIIFKFD) are Cytoplasmic-facing. A helical transmembrane segment spans residues 257-277 (FFGFALCSAGLVLFLLGLTFG). The Vacuolar portion of the chain corresponds to 278–287 (GNKYSWNSGQ). A helical membrane pass occupies residues 288-308 (VITYLVLGVLLFIFSLVYDFF). The Cytoplasmic portion of the chain corresponds to 309–329 (LFDKFNPEPDNISYRPLLLRR). Residues 330–350 (LVAKPAIIIVNMVTFLLCTGY) form a helical membrane-spanning segment. Residues 351 to 372 (NGQMIYSVQFFQLIFASSAWKA) are Vacuolar-facing. Residues 373–393 (GLHLIPIVITNVIAAIASGVI) traverse the membrane as a helical segment. The Cytoplasmic segment spans residues 394 to 401 (TKKLGLVK). A helical membrane pass occupies residues 402–422 (PLLIFGGVLGVIGAGLMTLMT). Residue N423 is glycosylated (N-linked (GlcNAc...) asparagine). The Vacuolar segment spans residues 423–430 (NTSTKSTQ). The chain crosses the membrane as a helical span at residues 431–451 (IGVLLLPGFSLGFALQASLMS). Residues 452 to 469 (AQLQITKDRPEAAMDFIE) lie on the Cytoplasmic side of the membrane. A helical transmembrane segment spans residues 470–492 (VTAFNTFMKSLGTTLGGVLSTTV). Residues 493-539 (FSASFHNKVSRAHLEPYEGKTVDDMILYRLQNYDGSHSTIGNILSDS) are Vacuolar-facing. A helical transmembrane segment spans residues 540-560 (IKNVFWMDLGFYALGFLFCSF). The Cytoplasmic portion of the chain corresponds to 561 to 582 (SSNKKLIIPKKDDTPEDNLEDK).

The protein belongs to the major facilitator superfamily.

It localises to the vacuole membrane. Transporter required for vacuolar uptake of basic amino acids. The sequence is that of Vacuolar basic amino acid transporter 5 (VBA5) from Saccharomyces cerevisiae (strain ATCC 204508 / S288c) (Baker's yeast).